A 372-amino-acid chain; its full sequence is Glutamate 5-kinase (372 aa).

Lys-14 contributes to the ATP binding site. Positions 54, 141, and 153 each coordinate substrate. Position 173–174 (173–174 (TD)) interacts with ATP. The PUA domain maps to 280 to 358 (RGTLVLDAGA…EAIESILGYS (79 aa)).

The protein belongs to the glutamate 5-kinase family.

The protein localises to the cytoplasm. The enzyme catalyses L-glutamate + ATP = L-glutamyl 5-phosphate + ADP. It participates in amino-acid biosynthesis; L-proline biosynthesis; L-glutamate 5-semialdehyde from L-glutamate: step 1/2. Catalyzes the transfer of a phosphate group to glutamate to form L-glutamate 5-phosphate. The polypeptide is Glutamate 5-kinase (Pseudomonas putida (strain ATCC 700007 / DSM 6899 / JCM 31910 / BCRC 17059 / LMG 24140 / F1)).